Consider the following 789-residue polypeptide: Polyribonucleotide nucleotidyltransferase (789 aa).

Mg(2+) is bound by residues Asp494 and Asp500. The region spanning 561–620 is the KH domain; it reads PRIESIFINKDKIRNVIGSGGKNIREICEKTGARVEIMQDGTVMIYAINNDAVEYAKNMI. Residues 630 to 697 form the S1 motif domain; that stretch reads GKVFDGTVIE…DREYVQLSMR (68 aa). Residues 709–789 form a disordered region; sequence GELYNIRKTN…NEVPRKPRFF (81 aa). Positions 737-749 are enriched in basic residues; the sequence is SEKKRRGSGRSRR. The segment covering 763–780 has biased composition (low complexity); that stretch reads NNGFGNGNRSFNDNRNGN.

The protein belongs to the polyribonucleotide nucleotidyltransferase family. The cofactor is Mg(2+).

The protein resides in the cytoplasm. It catalyses the reaction RNA(n+1) + phosphate = RNA(n) + a ribonucleoside 5'-diphosphate. Functionally, involved in mRNA degradation. Catalyzes the phosphorolysis of single-stranded polyribonucleotides processively in the 3'- to 5'-direction. The chain is Polyribonucleotide nucleotidyltransferase from Ehrlichia ruminantium (strain Gardel).